We begin with the raw amino-acid sequence, 89 residues long: Small ribosomal subunit protein uS15 (89 aa).

Belongs to the universal ribosomal protein uS15 family. In terms of assembly, part of the 30S ribosomal subunit. Forms a bridge to the 50S subunit in the 70S ribosome, contacting the 23S rRNA.

Its function is as follows. One of the primary rRNA binding proteins, it binds directly to 16S rRNA where it helps nucleate assembly of the platform of the 30S subunit by binding and bridging several RNA helices of the 16S rRNA. Forms an intersubunit bridge (bridge B4) with the 23S rRNA of the 50S subunit in the ribosome. The protein is Small ribosomal subunit protein uS15 of Thermosynechococcus vestitus (strain NIES-2133 / IAM M-273 / BP-1).